Reading from the N-terminus, the 479-residue chain is Trigger factor (479 aa).

The PPIase FKBP-type domain occupies 174 to 261; that stretch reads GDIAVVSFSG…LKELKTRELP (88 aa). The disordered stretch occupies residues 437–479; it reads KVLESEAKTSKPAAKSKGSKTKSTKTKTNKAKTEKPASDKTKS. Residues 453-466 show a composition bias toward basic residues; it reads KGSKTKSTKTKTNK. Over residues 467-479 the composition is skewed to basic and acidic residues; sequence AKTEKPASDKTKS.

The protein belongs to the FKBP-type PPIase family. Tig subfamily.

The protein resides in the cytoplasm. It catalyses the reaction [protein]-peptidylproline (omega=180) = [protein]-peptidylproline (omega=0). In terms of biological role, involved in protein export. Acts as a chaperone by maintaining the newly synthesized protein in an open conformation. Functions as a peptidyl-prolyl cis-trans isomerase. The protein is Trigger factor of Prochlorococcus marinus (strain MIT 9303).